We begin with the raw amino-acid sequence, 446 residues long: Na(+)-translocating NADH-quinone reductase subunit A (446 aa).

The protein belongs to the NqrA family. Composed of six subunits; NqrA, NqrB, NqrC, NqrD, NqrE and NqrF.

The catalysed reaction is a ubiquinone + n Na(+)(in) + NADH + H(+) = a ubiquinol + n Na(+)(out) + NAD(+). NQR complex catalyzes the reduction of ubiquinone-1 to ubiquinol by two successive reactions, coupled with the transport of Na(+) ions from the cytoplasm to the periplasm. NqrA to NqrE are probably involved in the second step, the conversion of ubisemiquinone to ubiquinol. This Vibrio campbellii (strain ATCC BAA-1116) protein is Na(+)-translocating NADH-quinone reductase subunit A.